A 69-amino-acid polypeptide reads, in one-letter code: uncharacterized protein (69 aa).

Residues 1-19 (MKRIWVSLMIAITACSAHA) form the signal peptide.

This is an uncharacterized protein from Pasteurella multocida (strain Pm70).